The sequence spans 656 residues: MTGGSSSRRRRAEERSSAAGTERNSRREAVGGMGAGPALAALLLAGSVLSATLLAPGRRAEPDLDEKRNVELKMDQALLLIHNELLGTSLTVYWKSDDCYQCTFQPLANVSHGGKPAKPSVAPVSVSTQHGSILQVNSTSEERAACRLEYKFGEFGNYSLLVQHASSGANKIACDIIVNENPVDSNLPVSIAFLVGLALIVAVSLLRLLLSLDDVNNWISKTIASRETDRLINSELGSPSRADPLSADYQPETRRSSANRLRCVDTFRGLALVLMVFVNYGGGKYWYFKHSSWNGLTVADLVFPWFVFIMGTSIFLSMTSILQRGCSKLKLLGKIVWRSFLLICIGVIIVNPNYCLGPLSWDKVRIPGVLQRLGVTYFVVAVLEFFFWKPVPDSCTLESSCFSLRDITSSWPQWLTILTLESIWLALTFFLPVPGCPTGYLGPGGIGDLGKYPHCTGGAAGYIDRLLLGDNHLYQHPSSTVLYHTEVAYDPEGVLGTINSIVMAFLGVQAGKILVYYKDQTKAILTRFAAWCCILGLISIVLTKVSANEGFIPINKNLWSISYVTTLSCFAFFILLILYPVVDVKGLWTGTPFFYPGMNSILVYVGHEVLENYFPFQWKLADEQSHKEHLIQNIVATALWVLIAYVLYKKKLFWKI.

The tract at residues 1-31 is disordered; the sequence is MTGGSSSRRRRAEERSSAAGTERNSRREAVG. Topologically, residues 1-185 are lumenal, vesicle; it reads MTGGSSSRRR…IIVNENPVDS (185 aa). N-linked (GlcNAc...) asparagine glycans are attached at residues asparagine 137 and asparagine 157. Cysteine 146 and cysteine 455 are joined by a disulfide. A helical transmembrane segment spans residues 186 to 206; that stretch reads NLPVSIAFLVGLALIVAVSLL. Residues 207–268 are Cytoplasmic-facing; sequence RLLLSLDDVN…NRLRCVDTFR (62 aa). Residues 234-253 are disordered; that stretch reads SELGSPSRADPLSADYQPET. Phosphoserine occurs at positions 238 and 240. Tyrosine 249 carries the post-translational modification Phosphotyrosine. A helical membrane pass occupies residues 269–289; that stretch reads GLALVLMVFVNYGGGKYWYFK. Histidine 290 is an active-site residue. Residues 290 to 295 are Lumenal, vesicle-facing; that stretch reads HSSWNG. A helical membrane pass occupies residues 296 to 316; it reads LTVADLVFPWFVFIMGTSIFL. Residues 317–338 are Cytoplasmic-facing; the sequence is SMTSILQRGCSKLKLLGKIVWR. Residues 339-359 traverse the membrane as a helical segment; sequence SFLLICIGVIIVNPNYCLGPL. At 360-367 the chain is on the lumenal, vesicle side; that stretch reads SWDKVRIP. Residues 368–388 form a helical membrane-spanning segment; that stretch reads GVLQRLGVTYFVVAVLEFFFW. At 389–413 the chain is on the cytoplasmic side; that stretch reads KPVPDSCTLESSCFSLRDITSSWPQ. Residues 414–434 traverse the membrane as a helical segment; the sequence is WLTILTLESIWLALTFFLPVP. The Lumenal, vesicle segment spans residues 435 to 493; sequence GCPTGYLGPGGIGDLGKYPHCTGGAAGYIDRLLLGDNHLYQHPSSTVLYHTEVAYDPEG. Residues 494–514 traverse the membrane as a helical segment; that stretch reads VLGTINSIVMAFLGVQAGKIL. The Cytoplasmic segment spans residues 515-522; the sequence is VYYKDQTK. A helical membrane pass occupies residues 523–543; the sequence is AILTRFAAWCCILGLISIVLT. At 544–557 the chain is on the lumenal, vesicle side; that stretch reads KVSANEGFIPINKN. Residues 558–578 traverse the membrane as a helical segment; it reads LWSISYVTTLSCFAFFILLIL. The Cytoplasmic segment spans residues 579–585; the sequence is YPVVDVK. A helical membrane pass occupies residues 586 to 606; sequence GLWTGTPFFYPGMNSILVYVG. At 607-627 the chain is on the lumenal, vesicle side; the sequence is HEVLENYFPFQWKLADEQSHK. The helical transmembrane segment at 628 to 648 threads the bilayer; that stretch reads EHLIQNIVATALWVLIAYVLY. Positions 641-656 are lysosomal targeting region; the sequence is VLIAYVLYKKKLFWKI. The Cytoplasmic portion of the chain corresponds to 649–656; it reads KKKLFWKI.

In terms of assembly, homooligomer. Homooligomerization is necessary for enzyme activity. In terms of processing, undergoes intralysosomal proteolytic cleavage; occurs within the end of the first and/or the beginning of the second luminal domain and is essential for the activation of the enzyme. Glycosylated. Expressed in the retina.

It is found in the lysosome membrane. The enzyme catalyses alpha-D-glucosaminyl-[heparan sulfate](n) + acetyl-CoA = N-acetyl-alpha-D-glucosaminyl-[heparan sulfate](n) + CoA + H(+). In terms of biological role, lysosomal acetyltransferase that acetylates the non-reducing terminal alpha-glucosamine residue of intralysosomal heparin or heparan sulfate, converting it into a substrate for luminal alpha-N-acetyl glucosaminidase. This is Heparan-alpha-glucosaminide N-acetyltransferase (Hgsnat) from Mus musculus (Mouse).